We begin with the raw amino-acid sequence, 272 residues long: MSAGEISTPQEYIGHHLNNLQIDLRTFSLVDPHNPPATFWTLNIDSMFFSVVLGLLFLVLFRKVAKHATSGVPGKFQTAVELVIGFVHGSVQDMYHGKSKLIAPLALTIFVWVFLMNLMDLLPIDLLPYIGEHVFGLPALRVVPSADVNITLSMALGVFILILFYSIKMKGVGGFTKELTLQPFNHPVFIPINLILEGVSLLSKPVSLGLRLFGNMYAGELIFILIAGLLPWWSQWLLNVPWAIFHILIITLQAFIFMVLTIVYLSMASEEH.

Transmembrane regions (helical) follow at residues 41-61 (TLNI…LVLF), 101-121 (LIAP…LMDL), 147-167 (DVNI…FYSI), 212-232 (LFGN…LLPW), and 243-263 (AIFH…LTIV).

It belongs to the ATPase A chain family. As to quaternary structure, F-type ATPases have 2 components, CF(1) - the catalytic core - and CF(0) - the membrane proton channel. CF(1) has five subunits: alpha(3), beta(3), gamma(1), delta(1), epsilon(1). CF(0) has three main subunits: a(1), b(2) and c(9-12). The alpha and beta chains form an alternating ring which encloses part of the gamma chain. CF(1) is attached to CF(0) by a central stalk formed by the gamma and epsilon chains, while a peripheral stalk is formed by the delta and b chains.

It is found in the cell inner membrane. Functionally, key component of the proton channel; it plays a direct role in the translocation of protons across the membrane. The protein is ATP synthase subunit a of Cronobacter sakazakii (strain ATCC BAA-894) (Enterobacter sakazakii).